Here is a 271-residue protein sequence, read N- to C-terminus: Protein CDV3 homolog (271 aa).

The span at 37–47 (KREVVKPKKPE) shows a compositional bias: basic and acidic residues. Disordered stretches follow at residues 37–151 (KREV…GHGP) and 186–271 (SQQA…DEAS). Residues 48–61 (VAAGGVAVVGENEN) are compositionally biased toward low complexity. Over residues 73 to 82 (VEEEWKEFEE) the composition is skewed to acidic residues. Positions 95 to 114 (QLSTISSARSRTAQESSESQ) are enriched in polar residues. Serine 134 bears the Phosphoserine mark. Residues 224-242 (RPEEQRKKKNEPAFEEVRH) show a composition bias toward basic and acidic residues.

The protein belongs to the CDV3 family.

This is Protein CDV3 homolog from Drosophila melanogaster (Fruit fly).